A 1044-amino-acid chain; its full sequence is Disease resistance protein PIK6-NP (1044 aa).

The segment at 3–184 is structured coiled coil (CC) domain; that stretch reads LAVGASEATM…PQIVSIKEPV (182 aa). Residues 187–543 form the NB-ARC domain; it reads KTVMENLEKW…IAEGFATEKQ (357 aa). The disordered stretch occupies residues 258–302; the sequence is QVSKQEEAGGSTESSSRDENTREPQGSSSTSSREENTAESGTKRM. 3 LRR repeats span residues 635-657, 682-705, and 706-728; these read LAQV…SFNY, MLVL…IEKL, and EYLE…VGQL. A disordered region spans residues 737–771; the sequence is GNKNTRKGLRLPQEKRNKAMKNPSPQGKTKEPAEK. 6 LRR repeats span residues 808–834, 840–862, 866–888, 889–911, 935–958, and 980–1004; these read LTGL…LLSS, SCGL…LYNM, PRYL…ITSI, TTLN…ILRN, KGIL…EFKS, and MPAL…ILEN.

It belongs to the disease resistance NB-LRR family.

Functionally, probable disease resistance protein. Resistance proteins guard the plant against pathogens that contain an appropriate avirulence protein via an indirect interaction with this avirulence protein. That triggers a defense system including the hypersensitive response, which restricts the pathogen growth. At the opposite of cultivar Kusabue, the cultivar Nipponbare doesn't recognize the effector avirulence protein AVR-Pik from M.oryzae. The chain is Disease resistance protein PIK6-NP from Oryza sativa subsp. japonica (Rice).